We begin with the raw amino-acid sequence, 309 residues long: Homoserine O-acetyltransferase (309 aa).

Cys148 functions as the Acyl-thioester intermediate in the catalytic mechanism. The substrate site is built by Lys169 and Ser198. His241 acts as the Proton acceptor in catalysis. Residue Glu243 is part of the active site. Arg255 contacts substrate.

Belongs to the MetA family.

The protein localises to the cytoplasm. It catalyses the reaction L-homoserine + acetyl-CoA = O-acetyl-L-homoserine + CoA. It participates in amino-acid biosynthesis; L-methionine biosynthesis via de novo pathway; O-acetyl-L-homoserine from L-homoserine: step 1/1. Its function is as follows. Transfers an acetyl group from acetyl-CoA to L-homoserine, forming acetyl-L-homoserine. In vitro, can also use propionyl-CoA as acyl donor. The protein is Homoserine O-acetyltransferase of Shouchella clausii (Alkalihalobacillus clausii).